The following is a 246-amino-acid chain: PARP-type zinc finger-containing protein C2A9.07c (246 aa).

The segment at 8–99 adopts a PARP-type; degenerate zinc-finger fold; it reads YRVELAKTGR…EKILRAFEQG (92 aa). Residues 103 to 126 show a composition bias toward basic and acidic residues; it reads EEDEERCRKMASDASEEKDRKIEE. The disordered stretch occupies residues 103–246; sequence EEDEERCRKM…ESGNEYSDSD (144 aa). Thr-130 bears the Phosphothreonine mark. Ser-131 is subject to Phosphoserine. Basic residues predominate over residues 157–168; the sequence is NKKHKAERKRSP. The span at 175–184 shows a compositional bias: acidic residues; sequence LEDDEEIEDV. The segment covering 185-196 has biased composition (basic and acidic residues); the sequence is ASDKDEEEKPWS. Positions 197–215 are enriched in acidic residues; it reads GDEEDDDELVVKDSEDETE. A phosphoserine mark is found at Ser-243 and Ser-245.

Its subcellular location is the nucleus. It is found in the mitochondrion. In Schizosaccharomyces pombe (strain 972 / ATCC 24843) (Fission yeast), this protein is PARP-type zinc finger-containing protein C2A9.07c.